The primary structure comprises 184 residues: ADP-ribosylation factor-like protein 8c (184 aa).

The segment at residues 1–18 is an intramembrane region (note=Mediates targeting to membranes); sequence MGLWDSLLNWLRSLFFKQ. Residues 29–34, 48–51, 70–74, and 129–132 each bind GTP; these read NAGKTS, MIPT, DLGGQ, and NKID.

This sequence belongs to the small GTPase superfamily. Arf family. In terms of assembly, interacts with tubulin.

Its subcellular location is the late endosome membrane. It localises to the lysosome membrane. It is found in the cytoplasm. The protein resides in the cytoskeleton. The protein localises to the spindle. May play a role in lysosome motility. May play a role in chromosome segregation. Functionally, (Microbial infection) Component of tomato mosaic virus (ToMV) RNA replication complexes. Required for tobamovirus multiplication, especially for efficient negative-strand RNA synthesis and viral RNA capping. The sequence is that of ADP-ribosylation factor-like protein 8c from Arabidopsis thaliana (Mouse-ear cress).